The sequence spans 312 residues: MPVVDQNAIELPPRISEASVADYFALLKPRVMSLVIFTALVGLMIAPGHVHPVLGFTAILCIAVGAGASGALNMALEGDIDVLMSRTANRPIPRGRITRGEAMGFGLTLSFFSVMTLGALVNWYAGGLLAFTIFFYVVIYTMGLKRRTAQNIVIGGAAGALPPVVAWAAATGSLSVEPLLLFLIIFFWTPPHFWALALFRSDDYARAGVPMLPVVAGPDATRLQILLYTIVLVAIAAAPWPLGYFDWVYGVTSLVLGAGMLVLAINVYRHRTGSTALRATRRLFAFSILYLFALFAVLLLDVLAKAVAPLIW.

8 consecutive transmembrane segments (helical) span residues 34–54 (LVIF…HPVL), 56–76 (FTAI…NMAL), 119–139 (ALVN…YVVI), 152–172 (IVIG…AATG), 179–199 (LLLF…LALF), 225–245 (ILLY…LGYF), 247–267 (WVYG…AINV), and 283–303 (LFAF…LDVL).

Belongs to the UbiA prenyltransferase family. Protoheme IX farnesyltransferase subfamily.

Its subcellular location is the cell inner membrane. It catalyses the reaction heme b + (2E,6E)-farnesyl diphosphate + H2O = Fe(II)-heme o + diphosphate. The protein operates within porphyrin-containing compound metabolism; heme O biosynthesis; heme O from protoheme: step 1/1. Converts heme B (protoheme IX) to heme O by substitution of the vinyl group on carbon 2 of heme B porphyrin ring with a hydroxyethyl farnesyl side group. In Nitrobacter hamburgensis (strain DSM 10229 / NCIMB 13809 / X14), this protein is Protoheme IX farnesyltransferase.